Here is a 501-residue protein sequence, read N- to C-terminus: L-ornithine N(5)-monooxygenase (501 aa).

Positions Met-1–Asn-16 are enriched in low complexity. The interval Met-1–Pro-40 is disordered. The span at Pro-26 to Gln-37 shows a compositional bias: polar residues. FAD is bound by residues Glu-92–His-100 and Gln-111. Residue Lys-116 coordinates substrate. Val-177 is a binding site for FAD. Ser-263 to Ser-266 is an NADP(+) binding site. Residues Asn-304–Phe-307 and Asn-334 each bind substrate. Asn-334 to Ser-336 is an NADP(+) binding site. Ser-476 to Leu-478 serves as a coordination point for FAD. Ser-479 contributes to the substrate binding site.

This sequence belongs to the lysine N(6)-hydroxylase/L-ornithine N(5)-oxygenase family. In terms of assembly, homotetramer. It depends on FAD as a cofactor.

It carries out the reaction L-ornithine + NADPH + O2 = N(5)-hydroxy-L-ornithine + NADP(+) + H2O. The enzyme catalyses L-ornithine + NADH + O2 = N(5)-hydroxy-L-ornithine + NAD(+) + H2O. Its pathway is siderophore biosynthesis. In terms of biological role, L-ornithine N(5)-monooxygenase; part of the siderophore biosynthetic pathway. Arthroderma benhamiae produces 2 types of extracellular siderophores, ferrichrome C and ferricrocin. The biosynthesis of these siderophores depends on the hydroxylation of ornithine to N(5)-hydroxyornithine, catalyzed by the monooxygenase sidA. The structure of ferricrocin differs from ferrichrome C only by a serine for alanine substitution and the assembly of both siderophores is suggested to be performed by the nonribosomal peptide synthase (NRPS) sidC. In Arthroderma benhamiae (strain ATCC MYA-4681 / CBS 112371) (Trichophyton mentagrophytes), this protein is L-ornithine N(5)-monooxygenase.